The primary structure comprises 258 residues: Pimeloyl-[acyl-carrier protein] methyl ester esterase (258 aa).

The AB hydrolase-1 domain occupies L16 to H241. Substrate contacts are provided by residues W22, S82–M83, and F143–Q147. The active-site Nucleophile is S82. Active-site residues include D207 and H235. H235 provides a ligand contact to substrate.

It belongs to the AB hydrolase superfamily. Carboxylesterase BioH family. As to quaternary structure, monomer.

It localises to the cytoplasm. It carries out the reaction 6-carboxyhexanoyl-[ACP] methyl ester + H2O = 6-carboxyhexanoyl-[ACP] + methanol + H(+). It participates in cofactor biosynthesis; biotin biosynthesis. The physiological role of BioH is to remove the methyl group introduced by BioC when the pimeloyl moiety is complete. It allows to synthesize pimeloyl-ACP via the fatty acid synthetic pathway through the hydrolysis of the ester bonds of pimeloyl-ACP esters. The sequence is that of Pimeloyl-[acyl-carrier protein] methyl ester esterase from Yersinia enterocolitica serotype O:8 / biotype 1B (strain NCTC 13174 / 8081).